Consider the following 314-residue polypeptide: Acetyl-coenzyme A carboxylase carboxyl transferase subunit beta (314 aa).

Positions 44-311 (LMNKCPHCGT…VETWQASSPL (268 aa)) constitute a CoA carboxyltransferase N-terminal domain. Zn(2+) contacts are provided by C48, C51, C67, and C70. The C4-type zinc finger occupies 48–70 (CPHCGTIHYSKDLEKNLRVCKGC).

It belongs to the AccD/PCCB family. As to quaternary structure, acetyl-CoA carboxylase is a heterohexamer composed of biotin carboxyl carrier protein (AccB), biotin carboxylase (AccC) and two subunits each of ACCase subunit alpha (AccA) and ACCase subunit beta (AccD). Zn(2+) serves as cofactor.

Its subcellular location is the cytoplasm. It catalyses the reaction N(6)-carboxybiotinyl-L-lysyl-[protein] + acetyl-CoA = N(6)-biotinyl-L-lysyl-[protein] + malonyl-CoA. Its pathway is lipid metabolism; malonyl-CoA biosynthesis; malonyl-CoA from acetyl-CoA: step 1/1. In terms of biological role, component of the acetyl coenzyme A carboxylase (ACC) complex. Biotin carboxylase (BC) catalyzes the carboxylation of biotin on its carrier protein (BCCP) and then the CO(2) group is transferred by the transcarboxylase to acetyl-CoA to form malonyl-CoA. The polypeptide is Acetyl-coenzyme A carboxylase carboxyl transferase subunit beta (Brevibacillus brevis (strain 47 / JCM 6285 / NBRC 100599)).